Consider the following 296-residue polypeptide: 4-hydroxy-tetrahydrodipicolinate synthase (296 aa).

Residue Thr47 participates in pyruvate binding. Residue Tyr136 is the Proton donor/acceptor of the active site. The active-site Schiff-base intermediate with substrate is Lys164. A pyruvate-binding site is contributed by Val206.

Belongs to the DapA family. In terms of assembly, homotetramer; dimer of dimers.

The protein localises to the cytoplasm. The enzyme catalyses L-aspartate 4-semialdehyde + pyruvate = (2S,4S)-4-hydroxy-2,3,4,5-tetrahydrodipicolinate + H2O + H(+). It participates in amino-acid biosynthesis; L-lysine biosynthesis via DAP pathway; (S)-tetrahydrodipicolinate from L-aspartate: step 3/4. Catalyzes the condensation of (S)-aspartate-beta-semialdehyde [(S)-ASA] and pyruvate to 4-hydroxy-tetrahydrodipicolinate (HTPA). This is 4-hydroxy-tetrahydrodipicolinate synthase from Thermosynechococcus vestitus (strain NIES-2133 / IAM M-273 / BP-1).